The sequence spans 83 residues: RNA-binding protein Hfq (83 aa).

The Sm domain occupies 10–70 (DAFLNQVRKE…ISTVSPLKPV (61 aa)).

It belongs to the Hfq family. Homohexamer.

In terms of biological role, RNA chaperone that binds small regulatory RNA (sRNAs) and mRNAs to facilitate mRNA translational regulation in response to envelope stress, environmental stress and changes in metabolite concentrations. Also binds with high specificity to tRNAs. In Pelotomaculum thermopropionicum (strain DSM 13744 / JCM 10971 / SI), this protein is RNA-binding protein Hfq.